Reading from the N-terminus, the 619-residue chain is Dihydroxy-acid dehydratase (619 aa).

Asp81 contributes to the Mg(2+) binding site. Cys122 contacts [2Fe-2S] cluster. Residues Asp123 and Lys124 each coordinate Mg(2+). An N6-carboxylysine modification is found at Lys124. Residue Cys195 coordinates [2Fe-2S] cluster. Glu494 serves as a coordination point for Mg(2+). The active-site Proton acceptor is Ser520.

This sequence belongs to the IlvD/Edd family. As to quaternary structure, homodimer. It depends on [2Fe-2S] cluster as a cofactor. Mg(2+) is required as a cofactor.

It catalyses the reaction (2R)-2,3-dihydroxy-3-methylbutanoate = 3-methyl-2-oxobutanoate + H2O. It carries out the reaction (2R,3R)-2,3-dihydroxy-3-methylpentanoate = (S)-3-methyl-2-oxopentanoate + H2O. The protein operates within amino-acid biosynthesis; L-isoleucine biosynthesis; L-isoleucine from 2-oxobutanoate: step 3/4. Its pathway is amino-acid biosynthesis; L-valine biosynthesis; L-valine from pyruvate: step 3/4. Its function is as follows. Functions in the biosynthesis of branched-chain amino acids. Catalyzes the dehydration of (2R,3R)-2,3-dihydroxy-3-methylpentanoate (2,3-dihydroxy-3-methylvalerate) into 2-oxo-3-methylpentanoate (2-oxo-3-methylvalerate) and of (2R)-2,3-dihydroxy-3-methylbutanoate (2,3-dihydroxyisovalerate) into 2-oxo-3-methylbutanoate (2-oxoisovalerate), the penultimate precursor to L-isoleucine and L-valine, respectively. The chain is Dihydroxy-acid dehydratase from Shewanella sp. (strain MR-4).